Here is a 908-residue protein sequence, read N- to C-terminus: DNA mismatch repair protein MutS (908 aa).

ATP is bound at residue 662-669 (GPNMGGKS).

The protein belongs to the DNA mismatch repair MutS family.

Functionally, this protein is involved in the repair of mismatches in DNA. It is possible that it carries out the mismatch recognition step. This protein has a weak ATPase activity. The sequence is that of DNA mismatch repair protein MutS from Rhizobium etli (strain ATCC 51251 / DSM 11541 / JCM 21823 / NBRC 15573 / CFN 42).